A 315-amino-acid chain; its full sequence is tRNA pseudouridine synthase B (315 aa).

The active-site Nucleophile is Asp-54.

This sequence belongs to the pseudouridine synthase TruB family. Type 1 subfamily.

The catalysed reaction is uridine(55) in tRNA = pseudouridine(55) in tRNA. Functionally, responsible for synthesis of pseudouridine from uracil-55 in the psi GC loop of transfer RNAs. This Cupriavidus taiwanensis (strain DSM 17343 / BCRC 17206 / CCUG 44338 / CIP 107171 / LMG 19424 / R1) (Ralstonia taiwanensis (strain LMG 19424)) protein is tRNA pseudouridine synthase B.